The sequence spans 493 residues: Glutamate--tRNA ligase (493 aa).

The 'HIGH' region signature appears at 10-20 (PSPTGFVHIGS). Positions 114, 116, 141, and 143 each coordinate Zn(2+). The 'KMSKS' region motif lies at 258–262 (KLSKR). ATP is bound at residue Lys-261.

Belongs to the class-I aminoacyl-tRNA synthetase family. Glutamate--tRNA ligase type 1 subfamily. As to quaternary structure, monomer. Zn(2+) is required as a cofactor.

It localises to the cytoplasm. It catalyses the reaction tRNA(Glu) + L-glutamate + ATP = L-glutamyl-tRNA(Glu) + AMP + diphosphate. Its function is as follows. Catalyzes the attachment of glutamate to tRNA(Glu) in a two-step reaction: glutamate is first activated by ATP to form Glu-AMP and then transferred to the acceptor end of tRNA(Glu). This Alkaliphilus metalliredigens (strain QYMF) protein is Glutamate--tRNA ligase.